Here is a 462-residue protein sequence, read N- to C-terminus: MQKVILVGKPNVGKSSLFNRLARRRIAITSDVSGTTRDTNKAKIEVEGKECILIDSGGLDDSSELFKNVKAKTLAEAKNSDVILYMVDGKMMPDDEDRAIFYELSKLNLPIALVINKIDSKKDEQREWEFVNFGSKNSFGISVSHNTGVDELSIWLAKHLEEKVQIKADTSDDFDDFLENYNDEGELSDEIDYESKNIRVGIIGRVNVGKSSLLNALVKESRAVVSDVAGTTIDPVNEIYEHDGRVFEFVDTAGIRKRGKIEGIERYALNRTEKILEETDVALLVLDSSEPLTELDERIAGIASKFELGVIIVLNKWDKSSEEFDELCKEIKDRFKFLSYAPIISVSALGGKRVHKIYPLIVEIYKNYTQKIQTSKLNEVIGEATKAHPLPRDKGRVVKIYYAVQFKTAPIMIALIMNRPKCLHFSYKRYLTNKLRESFSLTGVPIVLIPKKRGESDEDKEQ.

EngA-type G domains follow at residues 2–164 (QKVI…EEKV) and 198–369 (IRVG…KNYT). Residues 8–15 (GKPNVGKS), 55–59 (DSGGL), 116–119 (NKID), 204–211 (GRVNVGKS), 251–255 (DTAGI), and 315–318 (NKWD) contribute to the GTP site. Residues 370–454 (QKIQTSKLNE…PIVLIPKKRG (85 aa)) enclose the KH-like domain.

Belongs to the TRAFAC class TrmE-Era-EngA-EngB-Septin-like GTPase superfamily. EngA (Der) GTPase family. Associates with the 50S ribosomal subunit.

Functionally, GTPase that plays an essential role in the late steps of ribosome biogenesis. The polypeptide is GTPase Der (Campylobacter concisus (strain 13826)).